A 465-amino-acid polypeptide reads, in one-letter code: Mothers against decapentaplegic homolog 5 (465 aa).

Threonine 2 is subject to N-acetylthreonine. An MH1 domain is found at 13-137 (PAVKRLLGWK…YKRVESPVLP (125 aa)). Zn(2+)-binding residues include cysteine 65, cysteine 110, cysteine 122, and histidine 127. Residues 163–251 (NEPHMPQNAT…DTSSNMIPQT (89 aa)) form a disordered region. The span at 169-182 (QNATFPDSFHQPNN) shows a compositional bias: polar residues. Residues 186–197 (PLSPNSPYPPSP) show a composition bias toward pro residues. Low complexity predominate over residues 198-214 (ASSTYPNSPASSGPGSP). Over residues 237–251 (NSQPMDTSSNMIPQT) the composition is skewed to polar residues. Positions 271–465 (WCSIVYYELN…SPLNPISSVS (195 aa)) constitute an MH2 domain. Serine 463 and serine 465 each carry phosphoserine.

It belongs to the dwarfin/SMAD family. In terms of assembly, homodimer. Forms trimers with the co-SMAD SMAD4. Interacts with PEBP2-alpha subunit and SMURF1. Interacts with SUV39H1 and SUV39H2. Interacts (via MH2 domain) with LEMD3. Interacts with WWP1. Interacts with TMEM119. Interacts with ZNF8. Interacts with RANBP3L. Interacts with HK1. Interacts with HGS; this interaction attenuates BMP signaling. Post-translationally, phosphorylated on serine by BMP (bone morphogenetic proteins) type 1 receptor kinase. Ubiquitin-mediated proteolysis by SMAD-specific E3 ubiquitin ligase SMURF1. In terms of tissue distribution, predominantly expressed in mesenchyme and somites during embryogenesis, and present in many tissues of the adult.

It is found in the cytoplasm. The protein localises to the nucleus. It localises to the mitochondrion. Transcriptional regulator that plays a role in various cellular processes including embryonic development, cell differentiation, angiogenesis and tissue homeostasis. Upon BMP ligand binding to their receptors at the cell surface, is phosphorylated by activated type I BMP receptors (BMPRIs) and associates with SMAD4 to form a heteromeric complex which translocates into the nucleus acting as transcription factor. In turn, the hetero-trimeric complex recognizes cis-regulatory elements containing Smad Binding Elements (SBEs) to modulate the outcome of the signaling network. Non-phosphorylated SMAD5 has a cytoplasmic role in energy metabolism regulation by promoting mitochondrial respiration and glycolysis in response to cytoplasmic pH changes. Mechanistically, interacts with hexokinase 1/HK1 and thereby accelerates glycolysis. The sequence is that of Mothers against decapentaplegic homolog 5 (Smad5) from Mus musculus (Mouse).